A 207-amino-acid chain; its full sequence is Guanylate kinase (207 aa).

The Guanylate kinase-like domain maps to Gly-6–Glu-185. An ATP-binding site is contributed by Gly-13 to Gly-20.

It belongs to the guanylate kinase family.

The protein localises to the cytoplasm. It carries out the reaction GMP + ATP = GDP + ADP. In terms of biological role, essential for recycling GMP and indirectly, cGMP. This is Guanylate kinase from Staphylococcus aureus (strain Mu50 / ATCC 700699).